Consider the following 530-residue polypeptide: Autoinducer-2 kinase (530 aa).

Belongs to the FGGY kinase family.

Its subcellular location is the cytoplasm. The enzyme catalyses (S)-4,5-dihydroxypentane-2,3-dione + ATP = (2S)-2-hydroxy-3,4-dioxopentyl phosphate + ADP + H(+). Its function is as follows. Catalyzes the phosphorylation of autoinducer-2 (AI-2) to phospho-AI-2, which subsequently inactivates the transcriptional regulator LsrR and leads to the transcription of the lsr operon. Phosphorylates the ring-open form of (S)-4,5-dihydroxypentane-2,3-dione (DPD), which is the precursor to all AI-2 signaling molecules, at the C5 position. The protein is Autoinducer-2 kinase of Salmonella paratyphi B (strain ATCC BAA-1250 / SPB7).